The sequence spans 481 residues: Tryptophan biosynthesis protein TrpCF (481 aa).

The interval methionine 1–glutamate 283 is indole-3-glycerol phosphate synthase. Positions asparagine 284–tyrosine 481 are N-(5'-phosphoribosyl)anthranilate isomerase.

The protein in the N-terminal section; belongs to the TrpC family. It in the C-terminal section; belongs to the TrpF family. As to quaternary structure, monomer.

The enzyme catalyses N-(5-phospho-beta-D-ribosyl)anthranilate = 1-(2-carboxyphenylamino)-1-deoxy-D-ribulose 5-phosphate. It catalyses the reaction 1-(2-carboxyphenylamino)-1-deoxy-D-ribulose 5-phosphate + H(+) = (1S,2R)-1-C-(indol-3-yl)glycerol 3-phosphate + CO2 + H2O. Its pathway is amino-acid biosynthesis; L-tryptophan biosynthesis; L-tryptophan from chorismate: step 3/5. The protein operates within amino-acid biosynthesis; L-tryptophan biosynthesis; L-tryptophan from chorismate: step 4/5. Its function is as follows. Bifunctional enzyme that catalyzes two sequential steps of tryptophan biosynthetic pathway. The first reaction is catalyzed by the isomerase, coded by the TrpF domain; the second reaction is catalyzed by the synthase, coded by the TrpC domain. This chain is Tryptophan biosynthesis protein TrpCF (trpC), found in Vibrio parahaemolyticus serotype O3:K6 (strain RIMD 2210633).